Reading from the N-terminus, the 165-residue chain is Group 10 secretory phospholipase A2 (165 aa).

The N-terminal stretch at 1–31 (MGPLPVCLPIMLLLLLPSLLLLLLLPGPGSG) is a signal peptide. The propeptide occupies 32–42 (EASRILRVHRR). Disulfide bonds link cysteine 53–cysteine 111, cysteine 67–cysteine 157, cysteine 69–cysteine 85, cysteine 84–cysteine 139, cysteine 90–cysteine 164, cysteine 91–cysteine 132, cysteine 100–cysteine 125, and cysteine 118–cysteine 130. 3 residues coordinate Ca(2+): phenylalanine 68, glycine 70, and glycine 72. Residue histidine 88 is part of the active site. Position 89 (aspartate 89) interacts with Ca(2+). Asparagine 113 is a glycosylation site (N-linked (GlcNAc...) asparagine). Residue aspartate 133 is part of the active site.

This sequence belongs to the phospholipase A2 family. Interacts with PLA2R1; this interaction mediates PLA2G10 clearance and inactivation. Requires Ca(2+) as cofactor. As to expression, found in spleen, thymus, peripheral blood leukocytes, pancreas, lung, and colon. Expressed in neuronal fibers in dorsal root ganglia and in peripheral tissues including stomach, white adipose tissue and prostate (at protein level).

It localises to the secreted. The protein resides in the lysosome. The protein localises to the cytoplasmic vesicle. It is found in the secretory vesicle. Its subcellular location is the acrosome. The enzyme catalyses a 1,2-diacyl-sn-glycero-3-phosphocholine + H2O = a 1-acyl-sn-glycero-3-phosphocholine + a fatty acid + H(+). The catalysed reaction is 1-hexadecanoyl-2-(9Z-octadecenoyl)-sn-glycero-3-phosphocholine + H2O = 1-hexadecanoyl-sn-glycero-3-phosphocholine + (9Z)-octadecenoate + H(+). It catalyses the reaction 1-octadecanoyl-2-(5Z,8Z,11Z,14Z-eicosatetraenoyl)-sn-glycero-3-phosphocholine + H2O = 1-octadecanoyl-sn-glycero-3-phosphocholine + (5Z,8Z,11Z,14Z)-eicosatetraenoate + H(+). It carries out the reaction 1,2-dihexadecanoyl-sn-glycero-3-phosphocholine + H2O = 1-hexadecanoyl-sn-glycero-3-phosphocholine + hexadecanoate + H(+). The enzyme catalyses 1-hexadecanoyl-2-(9Z-octadecenoyl)-sn-glycero-3-phosphoglycerol + H2O = 1-hexadecanoyl-sn-glycero-3-phosphoglycerol + (9Z)-octadecenoate + H(+). The catalysed reaction is 1,2-dihexadecanoyl-sn-glycero-3-phospho-(1'-sn-glycerol) + H2O = 1-hexadecanoyl-sn-glycero-3-phospho-(1'-sn-glycerol) + hexadecanoate + H(+). It catalyses the reaction 1-hexadecanoyl-2-(9Z-octadecenoyl)-sn-glycero-3-phospho-L-serine + H2O = 1-hexadecanoyl-sn-glycero-3-phospho-L-serine + (9Z)-octadecenoate + H(+). It carries out the reaction 1-hexadecanoyl-2-(9Z,12Z-octadecadienoyl)-sn-glycero-3-phosphoethanolamine + H2O = 1-hexadecanoyl-sn-glycero-3-phosphoethanolamine + (9Z,12Z)-octadecadienoate + H(+). The enzyme catalyses 1-hexadecanoyl-2-(9Z-octadecenoyl)-sn-glycero-3-phosphate + H2O = 1-hexadecanoyl-sn-glycero-3-phosphate + (9Z)-octadecenoate + H(+). The catalysed reaction is 1-O-hexadecyl-2-acetyl-sn-glycero-3-phosphocholine + H2O = 1-O-hexadecyl-sn-glycero-3-phosphocholine + acetate + H(+). With respect to regulation, inhibited by methyl indoxam. Secretory calcium-dependent phospholipase A2 that primarily targets extracellular phospholipids. Hydrolyzes the ester bond of the fatty acyl group attached at sn-2 position of phospholipids with preference for phosphatidylcholines and phosphatidylglycerols over phosphatidylethanolamines. Preferentially releases sn-2 omega-6 and omega-3 polyunsaturated fatty acyl (PUFA) chains over saturated fatty acyls. Contributes to phospholipid remodeling of very low-density lipoprotein (VLDL), low-density lipoprotein (LDL) and high-density lipoprotein (HDL) particles. Hydrolyzes LDL phospholipids releasing unsaturated fatty acids that regulate macrophage differentiation toward foam cells. Efficiently hydrolyzes and inactivates platelet activating factor (PAF), a potent lipid mediator present in oxidized LDL. May act in an autocrine and paracrine manner. Secreted by lung epithelium, targets membrane phospholipids of infiltrating eosinophils, releasing arachidonate and boosting eicosanoid and cysteinyl leukotriene synthesis involved in airway inflammatory response. Secreted by gut epithelium, hydrolyzes dietary and biliary phosphatidylcholines in the gastrointestinal lumen. Plays a stem cell regulator role in colon epithelium. Within intracellular compartment, mediates Paneth-like cell differentiation and its stem cell supporting functions by inhibiting the Wnt signaling pathway in intestinal stem cell (ISC). Secreted in the intestinal lumen upon inflammation, acts in an autocrine way and promotes prostaglandin E2 synthesis that stimulates Wnt signaling pathway in ISCs and tissue regeneration. May participate in hair follicle morphogenesis by regulating phosphatidylethanolamines metabolism at the outermost epithelial layer and facilitating melanin synthesis. By releasing lysophosphatidylcholines (LPCs) at sperm acrosome, controls sperm cell capacitation, acrosome reaction and overall fertility. May promote neurite outgrowth in neuron fibers involved in nociception. Contributes to lipid remodeling of cellular membranes and generation of lipid mediators involved in pathogen clearance. Cleaves sn-2 fatty acyl chains of phosphatidylglycerols and phosphatidylethanolamines, which are major components of membrane phospholipids in bacteria. Displays bactericidal activity against Gram-positive bacteria by directly hydrolyzing phospholipids of the bacterial membrane. In pulmonary epithelium, may contribute to host defense response against adenoviral infection. Prevents adenovirus entry into host cells by hydrolyzing host cell plasma membrane, releasing C16:0 LPCs that inhibit virus-mediated membrane fusion and viral infection. Likely prevents adenoviral entry into the endosomes of host cells. May play a role in maturation and activation of innate immune cells including macrophages, group 2 innate lymphoid cells and mast cells. This Homo sapiens (Human) protein is Group 10 secretory phospholipase A2 (PLA2G10).